The following is a 361-amino-acid chain: MIIYNTTELQAIHSFSRLEFLKEVYGSIWVLIPILTLVLGITLGVLVIVWLEREISAGIQQRIGPEYAGPLGILQALADGTKLLFKENLFPSRGDTRLFTIGPSIAVISILLSYSVIPFGYRLILGDLSIGVFLWIAVSSLAPIGLLMSGYGSNNKYSFLGGLRAAAQSISYEIPLTLCVLSISLLSNSFSTVDIVEAQSKYGFWGWNLWRQPIGFIVFLISSLAECERLPFDLPEAEEELVAGYQTEYSGIKFGLFYVASYLNLLVSSLFVTVLYLGGWNLSIPYLFVPELFERGKVFETIICIFITLAKTYLFLFISIATRWTLPRLRMDQLLNLGWKFLLPISLGNLLLTTSFQLLSL.

7 helical membrane-spanning segments follow: residues 28 to 48 (IWVL…VLVI), 99 to 119 (FTIG…VIPF), 128 to 148 (LSIG…GLLM), 249 to 269 (YSGI…LVSS), 270 to 290 (LFVT…LFVP), 301 to 321 (TIIC…ISIA), and 341 to 361 (FLLP…LLSL).

It belongs to the complex I subunit 1 family. As to quaternary structure, NDH is composed of at least 16 different subunits, 5 of which are encoded in the nucleus.

The protein resides in the plastid. The protein localises to the chloroplast thylakoid membrane. The enzyme catalyses a plastoquinone + NADH + (n+1) H(+)(in) = a plastoquinol + NAD(+) + n H(+)(out). It carries out the reaction a plastoquinone + NADPH + (n+1) H(+)(in) = a plastoquinol + NADP(+) + n H(+)(out). Its function is as follows. NDH shuttles electrons from NAD(P)H:plastoquinone, via FMN and iron-sulfur (Fe-S) centers, to quinones in the photosynthetic chain and possibly in a chloroplast respiratory chain. The immediate electron acceptor for the enzyme in this species is believed to be plastoquinone. Couples the redox reaction to proton translocation, and thus conserves the redox energy in a proton gradient. This is NAD(P)H-quinone oxidoreductase subunit 1, chloroplastic from Jasminum nudiflorum (Winter jasmine).